The following is a 156-amino-acid chain: Aspartate carbamoyltransferase regulatory chain (156 aa).

Zn(2+)-binding residues include cysteine 109, cysteine 114, cysteine 140, and cysteine 143.

It belongs to the PyrI family. Contains catalytic and regulatory chains. It depends on Zn(2+) as a cofactor.

Its function is as follows. Involved in allosteric regulation of aspartate carbamoyltransferase. This chain is Aspartate carbamoyltransferase regulatory chain, found in Methanosarcina barkeri (strain Fusaro / DSM 804).